An 81-amino-acid polypeptide reads, in one-letter code: Large ribosomal subunit protein bL27 (81 aa).

Positions 1–11 are enriched in polar residues; it reads MATSKSGGSSK. Residues 1–21 are disordered; it reads MATSKSGGSSKNGRDSISKRL.

This sequence belongs to the bacterial ribosomal protein bL27 family.

The protein is Large ribosomal subunit protein bL27 of Borrelia hermsii (strain HS1 / DAH).